We begin with the raw amino-acid sequence, 136 residues long: Riboflavin kinase (136 aa).

Residue G15–R20 coordinates CDP. Residues T44 and N46 each contribute to the Mg(2+) site. FMN-binding residues include T103 and E111. Y116–R119 is a CDP binding site.

The protein belongs to the archaeal riboflavin kinase family. Mg(2+) is required as a cofactor.

It catalyses the reaction riboflavin + CTP = CDP + FMN + H(+). The protein operates within cofactor biosynthesis; FMN biosynthesis; FMN from riboflavin (CTP route): step 1/1. Its function is as follows. Catalyzes the CTP-dependent phosphorylation of riboflavin (vitamin B2) to form flavin mononucleotide (FMN). The polypeptide is Riboflavin kinase (Sulfurisphaera tokodaii (strain DSM 16993 / JCM 10545 / NBRC 100140 / 7) (Sulfolobus tokodaii)).